A 206-amino-acid chain; its full sequence is Ras-related protein Ral-A (206 aa).

Residues 24–29 (GVGKSA), 40–46 (VEDYEPT), and 127–130 (NKSD) each bind GTP. An Effector region motif is present at residues 43-51 (YEPTKADSY). Thr-46 carries (Microbial infection) O-linked (Glc) threonine; by P.sordellii toxin TcsL glycosylation. Ser-194 is subject to Phosphoserine; by AURKA. Cysteine methyl ester is present on Cys-203. A lipid anchor (S-geranylgeranyl cysteine) is attached at Cys-203. Positions 204–206 (CIL) are cleaved as a propeptide — removed in mature form.

The protein belongs to the small GTPase superfamily. Ras family. Interacts (via effector domain) with RALBP1; during mitosis, recruits RALBP1 to the mitochondrion where it promotes DNM1L phosphorylation and mitochondrial fission. Interacts with EXOC2/Sec5 and EXOC8/Exo84; binding to EXOC2 and EXOC8 is mutually exclusive. Interacts with Clostridium exoenzyme C3. Interacts with RALGPS1. Interacts with LPAR1 and LPAR2. Interacts with GRK2 in response to LPAR1 activation. RALA and GRK2 binding to LPAR1 is mutually exclusive. Interacts with CDC42. Post-translationally, phosphorylated. Phosphorylation at Ser-194 by AURKA/Aurora kinase A, during mitosis, induces RALA localization to the mitochondrion where it regulates mitochondrial fission. Prenylation is essential for membrane localization. The geranylgeranylated form and the farnesylated mutant do not undergo alternative prenylation in response to geranylgeranyltransferase I inhibitors (GGTIs) and farnesyltransferase I inhibitors (FTIs). In terms of processing, (Microbial infection) Glucosylated at Thr-46 by P.sordellii toxin TcsL from strain 6018. Monoglucosylation completely prevents the recognition of the downstream effector, blocking the GTPases in their inactive form. Not glucosylated by TcsL from strain VPI 9048.

The protein localises to the cell membrane. It is found in the cleavage furrow. Its subcellular location is the midbody. The protein resides in the midbody ring. It localises to the mitochondrion. The catalysed reaction is GTP + H2O = GDP + phosphate + H(+). With respect to regulation, alternates between an inactive form bound to GDP and an active form bound to GTP. Activated by a guanine nucleotide-exchange factor (GEF) and inactivated by a GTPase-activating protein (GAP). Functionally, multifunctional GTPase involved in a variety of cellular processes including gene expression, cell migration, cell proliferation, oncogenic transformation and membrane trafficking. Accomplishes its multiple functions by interacting with distinct downstream effectors. Acts as a GTP sensor for GTP-dependent exocytosis of dense core vesicles. The RALA-exocyst complex regulates integrin-dependent membrane raft exocytosis and growth signaling. Key regulator of LPAR1 signaling and competes with GRK2 for binding to LPAR1 thus affecting the signaling properties of the receptor. Required for anchorage-independent proliferation of transformed cells. During mitosis, supports the stabilization and elongation of the intracellular bridge between dividing cells. Cooperates with EXOC2 to recruit other components of the exocyst to the early midbody. During mitosis, also controls mitochondrial fission by recruiting to the mitochondrion RALBP1, which mediates the phosphorylation and activation of DNM1L by the mitotic kinase cyclin B-CDK1. This Homo sapiens (Human) protein is Ras-related protein Ral-A (RALA).